Reading from the N-terminus, the 301-residue chain is Acetylglutamate kinase (301 aa).

Substrate-binding positions include 68-69, arginine 90, and asparagine 195; that span reads GG.

It belongs to the acetylglutamate kinase family. ArgB subfamily.

It is found in the cytoplasm. It carries out the reaction N-acetyl-L-glutamate + ATP = N-acetyl-L-glutamyl 5-phosphate + ADP. It participates in amino-acid biosynthesis; L-arginine biosynthesis; N(2)-acetyl-L-ornithine from L-glutamate: step 2/4. Functionally, catalyzes the ATP-dependent phosphorylation of N-acetyl-L-glutamate. In Ectopseudomonas mendocina (strain ymp) (Pseudomonas mendocina), this protein is Acetylglutamate kinase.